The sequence spans 978 residues: uncharacterized protein (978 aa).

The N-terminal stretch at 1-27 (MHSWKKKLVVSQLALACTLAITSQANA) is a signal peptide. In terms of domain architecture, Autotransporter spans 713–978 (GLADNGGAWV…SANVGVKYTW (266 aa)).

This is an uncharacterized protein from Salmonella typhimurium (strain LT2 / SGSC1412 / ATCC 700720).